A 262-amino-acid polypeptide reads, in one-letter code: Glucosamine-6-phosphate deaminase (262 aa).

Asp-63 serves as the catalytic Proton acceptor; for enolization step. The active-site For ring-opening step is the Asn-129. Residue His-131 is the Proton acceptor; for ring-opening step of the active site. Glu-136 serves as the catalytic For ring-opening step.

Belongs to the glucosamine/galactosamine-6-phosphate isomerase family. NagB subfamily.

It catalyses the reaction alpha-D-glucosamine 6-phosphate + H2O = beta-D-fructose 6-phosphate + NH4(+). The protein operates within amino-sugar metabolism; N-acetylneuraminate degradation; D-fructose 6-phosphate from N-acetylneuraminate: step 5/5. Catalyzes the reversible isomerization-deamination of glucosamine 6-phosphate (GlcN6P) to form fructose 6-phosphate (Fru6P) and ammonium ion. The sequence is that of Glucosamine-6-phosphate deaminase from Bacillus cereus (strain ZK / E33L).